The following is a 548-amino-acid chain: Glucose-6-phosphate isomerase 1 (548 aa).

Glu-353 (proton donor) is an active-site residue. Catalysis depends on residues His-384 and Lys-512.

This sequence belongs to the GPI family.

It localises to the cytoplasm. The catalysed reaction is alpha-D-glucose 6-phosphate = beta-D-fructose 6-phosphate. It participates in carbohydrate biosynthesis; gluconeogenesis. The protein operates within carbohydrate degradation; glycolysis; D-glyceraldehyde 3-phosphate and glycerone phosphate from D-glucose: step 2/4. Its function is as follows. Catalyzes the reversible isomerization of glucose-6-phosphate to fructose-6-phosphate. In Neisseria meningitidis serogroup A / serotype 4A (strain DSM 15465 / Z2491), this protein is Glucose-6-phosphate isomerase 1.